The following is a 334-amino-acid chain: Lipoyl synthase (334 aa).

Positions 71, 76, 82, 97, 101, 104, and 312 each coordinate [4Fe-4S] cluster. Residues 83 to 301 (WSHGTATFMV…RQEGLRRGFR (219 aa)) form the Radical SAM core domain.

Belongs to the radical SAM superfamily. Lipoyl synthase family. It depends on [4Fe-4S] cluster as a cofactor.

Its subcellular location is the cytoplasm. It catalyses the reaction [[Fe-S] cluster scaffold protein carrying a second [4Fe-4S](2+) cluster] + N(6)-octanoyl-L-lysyl-[protein] + 2 oxidized [2Fe-2S]-[ferredoxin] + 2 S-adenosyl-L-methionine + 4 H(+) = [[Fe-S] cluster scaffold protein] + N(6)-[(R)-dihydrolipoyl]-L-lysyl-[protein] + 4 Fe(3+) + 2 hydrogen sulfide + 2 5'-deoxyadenosine + 2 L-methionine + 2 reduced [2Fe-2S]-[ferredoxin]. Its pathway is protein modification; protein lipoylation via endogenous pathway; protein N(6)-(lipoyl)lysine from octanoyl-[acyl-carrier-protein]: step 2/2. In terms of biological role, catalyzes the radical-mediated insertion of two sulfur atoms into the C-6 and C-8 positions of the octanoyl moiety bound to the lipoyl domains of lipoate-dependent enzymes, thereby converting the octanoylated domains into lipoylated derivatives. The polypeptide is Lipoyl synthase (Halorhodospira halophila (strain DSM 244 / SL1) (Ectothiorhodospira halophila (strain DSM 244 / SL1))).